We begin with the raw amino-acid sequence, 63 residues long: MVHEYDKTLKVCLVRSLIGVPSRHRLSVRALGLSKVSDMRKVNDTPQVRGLINKVHYLVRIQD.

The protein belongs to the universal ribosomal protein uL30 family. As to quaternary structure, part of the 50S ribosomal subunit.

This chain is Large ribosomal subunit protein uL30, found in Xylella fastidiosa (strain M23).